The sequence spans 503 residues: Sodium/hydrogen exchanger 3 (503 aa).

Over 1–22 the chain is Cytoplasmic; the sequence is MVIGLSTMLEKTEALFASDHAS. A helical transmembrane segment spans residues 23–43; it reads VVSMNLFVALLCACIVLGHLL. The Vacuolar segment spans residues 44–51; it reads EETRWMNE. Asparagine 50 carries an N-linked (GlcNAc...) asparagine glycan. A helical transmembrane segment spans residues 52-72; sequence SITALIIGSCTGIVILLISGG. Topologically, residues 73-76 are cytoplasmic; sequence KSSR. The segment at residues 77–97 is an intramembrane region (helical); the sequence is ILVFSEDLFFIYLLPPIIFNA. Topologically, residues 98–109 are cytoplasmic; the sequence is GFQVKKKQFFRN. The helical transmembrane segment at 110-130 threads the bilayer; sequence FMTIMLFGAIGTLISFVIISF. Residues 131–138 lie on the Vacuolar side of the membrane; that stretch reads GAKHLFEK. A helical membrane pass occupies residues 139-159; it reads MNIGDLTIADYLAIGAIFSAT. At 160 to 174 the chain is on the cytoplasmic side; it reads DSVCTLQVLNQDETP. The helical transmembrane segment at 175 to 195 threads the bilayer; sequence LLYSLVFGEGVVNDATSVVLF. Over 196–219 the chain is Vacuolar; the sequence is NAIQRFDLTNINSAIALEFAGNFF. Residues 220–240 form a helical membrane-spanning segment; that stretch reads YLFILSTALGVAAGLLSAFVI. The Cytoplasmic segment spans residues 241–265; sequence KKLYIGRHSTDREVALMMLLAYLSY. A helical transmembrane segment spans residues 266–286; that stretch reads MLAELFHLSSILTVFFCGIVM. Topologically, residues 287 to 305 are vacuolar; it reads SHYTWHNVTDKSKVTTKHT. N-linked (GlcNAc...) asparagine glycosylation occurs at asparagine 293. A helical membrane pass occupies residues 306–326; that stretch reads FAAMSFLAEIFIFLYVGMDAL. The Cytoplasmic portion of the chain corresponds to 327 to 345; that stretch reads DIEKWDVVRNSPGQSIGVS. Residues 346-366 traverse the membrane as a helical segment; that stretch reads SILLGLILLGRAAFVFPLSFL. Residues 367 to 383 lie on the Vacuolar side of the membrane; sequence SNLTKSSPDEKIDLKKQ. Asparagine 368 carries N-linked (GlcNAc...) asparagine glycosylation. The helical transmembrane segment at 384 to 406 threads the bilayer; sequence VTIWWAGLMRGAVSMALAYNQFT. The Cytoplasmic portion of the chain corresponds to 407 to 416; that stretch reads TSGHTKVLGN. Residues 417 to 437 form a helical membrane-spanning segment; it reads AIMITSTITVVLFSTVVFGLL. Over 438 to 503 the chain is Vacuolar; that stretch reads TKPLVKHLQP…FWKSPSRFTH (66 aa).

The protein belongs to the monovalent cation:proton antiporter 1 (CPA1) transporter (TC 2.A.36) family. Expressed in roots.

It is found in the vacuole membrane. It carries out the reaction Na(+)(in) + H(+)(out) = Na(+)(out) + H(+)(in). The catalysed reaction is K(+)(in) + H(+)(out) = K(+)(out) + H(+)(in). In terms of biological role, may act in low affinity electroneutral exchange of protons for cations such as Na(+) or K(+) across membranes. May also exchange Li(+) and Cs(+) with a lower affinity. The polypeptide is Sodium/hydrogen exchanger 3 (NHX3) (Arabidopsis thaliana (Mouse-ear cress)).